The sequence spans 88 residues: Small ribosomal subunit protein uS15c (88 aa).

The protein belongs to the universal ribosomal protein uS15 family. As to quaternary structure, part of the 30S ribosomal subunit.

The protein resides in the plastid. It is found in the chloroplast. This Aethionema cordifolium (Lebanon stonecress) protein is Small ribosomal subunit protein uS15c (rps15).